Consider the following 397-residue polypeptide: Probable N-succinyldiaminopimelate aminotransferase DapC (397 aa).

Residues 109–110 (GS) and 218–222 (DGMAE) each bind pyridoxal 5'-phosphate. K232 carries the post-translational modification N6-(pyridoxal phosphate)lysine.

The protein belongs to the class-III pyridoxal-phosphate-dependent aminotransferase family. In terms of assembly, homodimer. Requires pyridoxal 5'-phosphate as cofactor.

The protein localises to the cytoplasm. The catalysed reaction is N-succinyl-(2S,6S)-2,6-diaminopimelate + 2-oxoglutarate = (S)-2-succinylamino-6-oxoheptanedioate + L-glutamate. It functions in the pathway amino-acid biosynthesis; L-lysine biosynthesis via DAP pathway; LL-2,6-diaminopimelate from (S)-tetrahydrodipicolinate (succinylase route): step 2/3. Its function is as follows. Involved in the lysine biosynthetic pathways. It catalyzes the transfer of an amino group from L-glutamate to N-succinyl-2-l-amino-6-oxoheptanedioate (N-succinyl-2-l-amino-6-ketopimelate) in a PLP-dependent reaction, yielding as products N-succinyl-l-2,6-diaminoheptanedioate (N-succinyl-diaminopimelate) and 2-oxoglutarate. In Mycobacterium tuberculosis (strain CDC 1551 / Oshkosh), this protein is Probable N-succinyldiaminopimelate aminotransferase DapC (dapC).